The chain runs to 353 residues: Dihydroorotate dehydrogenase (quinone) (353 aa).

Residues 67–71 (AGFDK) and threonine 91 each bind FMN. Position 71 (lysine 71) interacts with substrate. 116–120 (NRMGF) contacts substrate. The FMN site is built by asparagine 144 and asparagine 177. Asparagine 177 contacts substrate. Serine 180 serves as the catalytic Nucleophile. Residue asparagine 182 coordinates substrate. The FMN site is built by lysine 215 and threonine 243. 244-245 (NT) serves as a coordination point for substrate. FMN-binding positions include glycine 264, glycine 293, and 314–315 (YT).

The protein belongs to the dihydroorotate dehydrogenase family. Type 2 subfamily. As to quaternary structure, monomer. FMN serves as cofactor.

Its subcellular location is the cell membrane. The catalysed reaction is (S)-dihydroorotate + a quinone = orotate + a quinol. The protein operates within pyrimidine metabolism; UMP biosynthesis via de novo pathway; orotate from (S)-dihydroorotate (quinone route): step 1/1. Functionally, catalyzes the conversion of dihydroorotate to orotate with quinone as electron acceptor. This chain is Dihydroorotate dehydrogenase (quinone), found in Gloeobacter violaceus (strain ATCC 29082 / PCC 7421).